The sequence spans 65 residues: Large ribosomal subunit protein uL30 (65 aa).

Belongs to the universal ribosomal protein uL30 family. Part of the 50S ribosomal subunit.

This chain is Large ribosomal subunit protein uL30, found in Rickettsia bellii (strain OSU 85-389).